Here is a 506-residue protein sequence, read N- to C-terminus: Maturase K (506 aa).

This sequence belongs to the intron maturase 2 family. MatK subfamily.

It is found in the plastid. It localises to the chloroplast. In terms of biological role, usually encoded in the trnK tRNA gene intron. Probably assists in splicing its own and other chloroplast group II introns. The protein is Maturase K of Jasminum nudiflorum (Winter jasmine).